We begin with the raw amino-acid sequence, 375 residues long: Succinyl-diaminopimelate desuccinylase (375 aa).

Residue H66 participates in Zn(2+) binding. D68 is a catalytic residue. D99 lines the Zn(2+) pocket. E133 functions as the Proton acceptor in the catalytic mechanism. Residues E134, E162, and H348 each contribute to the Zn(2+) site.

This sequence belongs to the peptidase M20A family. DapE subfamily. Homodimer. The cofactor is Zn(2+). Requires Co(2+) as cofactor.

It carries out the reaction N-succinyl-(2S,6S)-2,6-diaminopimelate + H2O = (2S,6S)-2,6-diaminopimelate + succinate. Its pathway is amino-acid biosynthesis; L-lysine biosynthesis via DAP pathway; LL-2,6-diaminopimelate from (S)-tetrahydrodipicolinate (succinylase route): step 3/3. Catalyzes the hydrolysis of N-succinyl-L,L-diaminopimelic acid (SDAP), forming succinate and LL-2,6-diaminopimelate (DAP), an intermediate involved in the bacterial biosynthesis of lysine and meso-diaminopimelic acid, an essential component of bacterial cell walls. This is Succinyl-diaminopimelate desuccinylase from Yersinia pestis bv. Antiqua (strain Antiqua).